The sequence spans 245 residues: Probable phosphatase YcdX (245 aa).

His-7, His-9, His-15, His-40, Glu-73, His-101, His-131, Asp-192, and His-194 together coordinate Zn(2+).

This sequence belongs to the PHP family. In terms of assembly, homotrimer. Zn(2+) serves as cofactor.

The chain is Probable phosphatase YcdX from Shigella dysenteriae serotype 1 (strain Sd197).